A 153-amino-acid polypeptide reads, in one-letter code: Endoribonuclease YbeY (153 aa).

Positions 114, 118, and 124 each coordinate Zn(2+).

Belongs to the endoribonuclease YbeY family. Requires Zn(2+) as cofactor.

Its subcellular location is the cytoplasm. Its function is as follows. Single strand-specific metallo-endoribonuclease involved in late-stage 70S ribosome quality control and in maturation of the 3' terminus of the 16S rRNA. In Shewanella baltica (strain OS155 / ATCC BAA-1091), this protein is Endoribonuclease YbeY.